The chain runs to 188 residues: MSVVFVTGNAGKLRETNHILAPTGIELTSHKLDLEETQGTIEEVSIAKAKAAAKILNKPVLVEDTALGFAALKGLPGVYIKWFLDSLGHEGLNKMLAGFEDKSATAWCTFAYCGGPDEDVLLFQGTCEGTIVPPRGENNFGWNAVFEPKGYTETFAEMSEETKNAISHRFKALEKLKVFLAEKAEQSK.

Residue 7 to 12 (TGNAGK) participates in ITP binding. A Mg(2+)-binding site is contributed by glutamate 36. ITP-binding positions include lysine 48, 64–65 (DT), lysine 81, 140–143 (FGWN), lysine 163, and 168–169 (HR).

It belongs to the HAM1 NTPase family. In terms of assembly, homodimer. It depends on Mg(2+) as a cofactor. Mn(2+) serves as cofactor.

The protein localises to the cytoplasm. It localises to the nucleus. The enzyme catalyses ITP + H2O = IMP + diphosphate + H(+). The catalysed reaction is dITP + H2O = dIMP + diphosphate + H(+). It catalyses the reaction XTP + H2O = XMP + diphosphate + H(+). Functionally, pyrophosphatase that hydrolyzes non-canonical purine nucleotides such as inosine triphosphate (ITP), deoxyinosine triphosphate (dITP) or xanthosine 5'-triphosphate (XTP) to their respective monophosphate derivatives. The enzyme does not distinguish between the deoxy- and ribose forms. Probably excludes non-canonical purines from RNA and DNA precursor pools, thus preventing their incorporation into RNA and DNA and avoiding chromosomal lesions. The polypeptide is Inosine triphosphate pyrophosphatase (Yarrowia lipolytica (strain CLIB 122 / E 150) (Yeast)).